The chain runs to 593 residues: MLRPWLRQSTRAARSLPCCQCPRPYSSRLPTLTSPSSSVRRLQTSASESQDRVPLRKQLKQNAKALKAEKRQRRESEEASRQKWELTVGIEIHAQLNTETKLFSRASTSSTDLPNSNVALFDLAFPGSQPEFQVPTLLPALRAALALNCDIQPVSRFDRKHYFYQDQPAGYQITQYYEPFARNGYVDLFGYDGIAPEDGDHVRIGIKQVQLEQDTAKSQEYHPSTQLLDFNRVSHPLVEIITMPQIHTPATAAACVRKIQAILQSCSAVTTGMELGGLRADVNVSIRQRGDTEGVHQYGGIGGLGQRTEIKNLSSFKAVEDAIIAEKNRQIAVLESGGVVEGETRGWTIGSTETRRLRGKEGEVDYRYMPDPDLPPLLIGADLVSELANTLPTSSDELIGLLTGKEYGLSIEDAKPLVELEDGARLEYYQDVVDILRDLQQDQDPKSRGGLARVAGNWVLHELGGLLTKADLPWDAERVSALSLAQIIDHVQRKQITGPTAKQVLAMVFDGDTRAIPQLLEEENLLLRPLSREEYVALAEAAISQNPQMVEQIRTKNQLGKLGWFVGQMMRMGEKGRVEAPKADAILRELILG.

A mitochondrion-targeting transit peptide spans 1–49; the sequence is MLRPWLRQSTRAARSLPCCQCPRPYSSRLPTLTSPSSSVRRLQTSASES. The segment covering 27–42 has biased composition (low complexity); sequence SRLPTLTSPSSSVRRL. Residues 27 to 80 are disordered; sequence SRLPTLTSPSSSVRRLQTSASESQDRVPLRKQLKQNAKALKAEKRQRRESEEAS. Residues 66 to 80 are compositionally biased toward basic and acidic residues; it reads LKAEKRQRRESEEAS.

Belongs to the GatB/GatE family. GatB subfamily. As to quaternary structure, subunit of the heterotrimeric GatCAB amidotransferase (AdT) complex, composed of A, B and C subunits.

The protein resides in the mitochondrion. The enzyme catalyses L-glutamyl-tRNA(Gln) + L-glutamine + ATP + H2O = L-glutaminyl-tRNA(Gln) + L-glutamate + ADP + phosphate + H(+). In terms of biological role, allows the formation of correctly charged Gln-tRNA(Gln) through the transamidation of misacylated Glu-tRNA(Gln) in the mitochondria. The reaction takes place in the presence of glutamine and ATP through an activated gamma-phospho-Glu-tRNA(Gln). In Aspergillus oryzae (strain ATCC 42149 / RIB 40) (Yellow koji mold), this protein is Glutamyl-tRNA(Gln) amidotransferase subunit B, mitochondrial.